Consider the following 339-residue polypeptide: Ketol-acid reductoisomerase (NADP(+)) (339 aa).

The region spanning 1-182 (MRVYYDRDAD…GGGRAGIIET (182 aa)) is the KARI N-terminal Rossmann domain. Residues 24–27 (YGSQ), R48, S51, S53, and 83–86 (DELQ) each bind NADP(+). H108 is an active-site residue. G134 contacts NADP(+). In terms of domain architecture, KARI C-terminal knotted spans 183-328 (TFKEECETDL…ARLRDMMPWI (146 aa)). Residues D191, E195, E227, and E231 each contribute to the Mg(2+) site. S252 is a binding site for substrate.

It belongs to the ketol-acid reductoisomerase family. Mg(2+) serves as cofactor.

The catalysed reaction is (2R)-2,3-dihydroxy-3-methylbutanoate + NADP(+) = (2S)-2-acetolactate + NADPH + H(+). The enzyme catalyses (2R,3R)-2,3-dihydroxy-3-methylpentanoate + NADP(+) = (S)-2-ethyl-2-hydroxy-3-oxobutanoate + NADPH + H(+). It participates in amino-acid biosynthesis; L-isoleucine biosynthesis; L-isoleucine from 2-oxobutanoate: step 2/4. The protein operates within amino-acid biosynthesis; L-valine biosynthesis; L-valine from pyruvate: step 2/4. Its function is as follows. Involved in the biosynthesis of branched-chain amino acids (BCAA). Catalyzes an alkyl-migration followed by a ketol-acid reduction of (S)-2-acetolactate (S2AL) to yield (R)-2,3-dihydroxy-isovalerate. In the isomerase reaction, S2AL is rearranged via a Mg-dependent methyl migration to produce 3-hydroxy-3-methyl-2-ketobutyrate (HMKB). In the reductase reaction, this 2-ketoacid undergoes a metal-dependent reduction by NADPH to yield (R)-2,3-dihydroxy-isovalerate. The polypeptide is Ketol-acid reductoisomerase (NADP(+)) (Bradyrhizobium sp. (strain ORS 278)).